The sequence spans 443 residues: Probable glucomannan 4-beta-mannosyltransferase 11 (443 aa).

Aspartate 52 is an active-site residue. Residues aspartate 111 and aspartate 113 each contribute to the substrate site. Aspartate 205 is an active-site residue. 4 helical membrane passes run 284 to 304, 321 to 341, 400 to 420, and 421 to 441; these read IIVH…SVFF, ITLF…FWVL, EMMV…FGKT, and VLYI…IGFI.

This sequence belongs to the glycosyltransferase 2 family. Plant cellulose synthase-like A subfamily.

It localises to the golgi apparatus membrane. The enzyme catalyses GDP-mannose + (glucomannan)n = GDP + (glucomannan)n+1.. In terms of biological role, probable mannan synthase which consists of a 4-beta-mannosyltransferase activity on mannan using GDP-mannose. The beta-1,4-mannan product is the backbone for galactomannan synthesis by galactomannan galactosyltransferase. Galactomannan is a noncellulosic polysaccharides of plant cell wall. The sequence is that of Probable glucomannan 4-beta-mannosyltransferase 11 from Arabidopsis thaliana (Mouse-ear cress).